The primary structure comprises 910 residues: Staphylococcal nuclease domain-containing protein 1 (910 aa).

An N-acetylalanine modification is found at Ala-2. 3 consecutive TNase-like domains span residues 18–166 (TVQR…MWSE), 193–328 (KPVN…IWRD), and 341–496 (KQFV…LHSK). Thr-103 is modified (phosphothreonine). Lys-193 is subject to N6-acetyllysine. Thr-240 is modified (phosphothreonine). 2 consecutive short sequence motifs (nuclear localization signal) follow at residues 321–325 (RRLRI) and 388–392 (KKLRP). At Ser-426 the chain carries Phosphoserine. A Glycyl lysine isopeptide (Lys-Gly) (interchain with G-Cter in SUMO2) cross-link involves residue Lys-513. Residues 525–660 (GRSEAVVEYV…KQKKEKVWAH (136 aa)) enclose the TNase-like 4 domain. Residue Lys-641 is modified to N6-acetyllysine. The residue at position 645 (Ser-645) is a Phosphoserine. Residues 729-787 (APRRGEFCIAKFVDGEWYRARVEKVESPAKIHVFYIDYGNREVLPSTRLGTLSPAFSTR) enclose the Tudor domain. Thr-779 carries the phosphothreonine modification. 3 positions are modified to phosphoserine: Ser-781, Ser-785, and Ser-909.

Forms a ternary complex with STAT6 and POLR2A. Associates with the RNA-induced silencing complex (RISC). Interacts with the RISC components AGO2, FMR1 and TNRC6A. Interacts with GTF2E1 and GTF2E2. Interacts with PIM1. Interacts with STAT5. Interacts with SYT11 (via C2 2 domain); the interaction with SYT11 is direct. As to quaternary structure, (Microbial infection) Interacts with EAV NSP1. Binds to acidic transactivation domain of EBNA2. Interacts with SARS-CoV-2 NSP9. Phosphorylated by PIM1 in vitro. In terms of tissue distribution, ubiquitously expressed.

It localises to the cytoplasm. The protein localises to the nucleus. It is found in the melanosome. It catalyses the reaction Endonucleolytic cleavage to nucleoside 3'-phosphates and 3'-phosphooligonucleotide end-products.. In terms of biological role, endonuclease that mediates miRNA decay of both protein-free and AGO2-loaded miRNAs. As part of its function in miRNA decay, regulates mRNAs involved in G1-to-S phase transition. Functions as a bridging factor between STAT6 and the basal transcription factor. Plays a role in PIM1 regulation of MYB activity. Functions as a transcriptional coactivator for STAT5. Functionally, (Microbial infection) Functions as a transcriptional coactivator for the Epstein-Barr virus nuclear antigen 2 (EBNA2). (Microbial infection) Promotes SARS-CoV-2 RNA synthesis by binding to negative-sense RNA and the viral protein nsp9. The sequence is that of Staphylococcal nuclease domain-containing protein 1 (SND1) from Homo sapiens (Human).